The following is a 449-amino-acid chain: CCAAT/enhancer-binding protein (449 aa).

Disordered stretches follow at residues 211-233 (HATY…TIKE), 276-302 (GNPL…NGSQ), and 334-386 (SKLH…KAKV). Composition is skewed to low complexity over residues 215-229 (NNSS…SDSS), 280-301 (NGGN…SNGS), and 339-349 (QQQHQQHQQQQ). The segment covering 357–368 (KHVDKGTDEYRR) has biased composition (basic and acidic residues). In terms of domain architecture, bZIP spans 363 to 426 (TDEYRRRRER…QLHKQIYMQL (64 aa)). The tract at residues 367–396 (RRRRERNNIAVRKSREKAKVRSREVEERVK) is basic motif. The segment at 398-405 (LLKEKDAL) is leucine-zipper.

It belongs to the bZIP family. C/EBP subfamily. Binds DNA as a dimer and can form stable heterodimers. Interacts with trbl. Post-translationally, ubiquitination/deubiquitination regulates border cell migration. Ubiquitination is stimulated by trbl, which leads to proteasomal degradation and inhibits border cell migration. Deubiquitination by Usp47, leads to its stabilization and promotes border cell migration.

The protein localises to the nucleus. Required for the expression of gene products mediating border cell migration. Among the DNA sequences that this protein binds with high affinity is a conserved site within the promoter of its gene. This chain is CCAAT/enhancer-binding protein (slbo), found in Drosophila melanogaster (Fruit fly).